Consider the following 328-residue polypeptide: Coiled-coil domain-containing protein 54 (328 aa).

Positions 93 to 148 form a coiled coil; sequence KIQEKTDFFQKQMQVLETKMNVNENKQCATAEDIFSVKEDVDALKKKVTELGNQNS. Threonine 182 bears the Phosphothreonine mark.

The polypeptide is Coiled-coil domain-containing protein 54 (CCDC54) (Bos taurus (Bovine)).